Reading from the N-terminus, the 472-residue chain is MAGDESGTTLGQPHLYKQDLSTLDVSKLTPLSQEIISRQATINIGTIGHVAHGKSTVVKAISGVHTVRFKNELERNITIKLGYANAKVYKLDDPSCPRPECYRSCGSSTPDEFPTDIPGTKGNFKLVRHVSFVDCPGHDILMATMLNGAAVMDAALLLIAGNESCPQPQTSEHLAAIEIMKLKHILILQNKIDLVKESQAKEQYEQILAFVQGTVAEGAPIIPISAQLKYNIEVVCEYIVNKIPVPVRDFTSEPRLIVIRSFDVNKPGCEVDDLKGGVAGGSILKGVLKVGQELEVRPGIVSKDHEGKLMCKPIFSKIVSLFAEHNDLQYAAPGGLIGVGTKIDPTLCRADRMVGQVLGAVGALPEIFTELEISYFLLRRLLGVRTEGDKKAAKVQKLSKNEVLMVNIGSLSTGGRVSAVKADLAKIVLTNPVCTEVGEKIALSRRVEKHWRLIGWGQIRRGVTITPTVDDD.

Residues 39–247 (QATINIGTIG…YIVNKIPVPV (209 aa)) form the tr-type G domain. Residues 48–55 (GHVAHGKS) are G1. 51–56 (AHGKST) contacts GTP. Residues 76-80 (NITIK) form a G2 region. The tract at residues 134–137 (DCPG) is G3. Residues 190–193 (NKID) and 225–227 (SAQ) contribute to the GTP site. The segment at 190–193 (NKID) is G4. Positions 225 to 227 (SAQ) are G5. Positions 457 to 469 (GQIRRGVTITPTV) are interacts with cdc123.

It belongs to the TRAFAC class translation factor GTPase superfamily. Classic translation factor GTPase family. EIF2G subfamily. As to quaternary structure, eukaryotic translation initiation factor 2 eIF2 is a heterotrimeric complex composed of an alpha (EIF2S1), a beta (EIF2S2) and a gamma (EIF2S3) chain. eIF2 is member of the 43S pre-initiation complex (43S PIC).

The protein localises to the cytoplasm. It is found in the cytosol. It catalyses the reaction GTP + H2O = GDP + phosphate + H(+). Functionally, member of the eIF2 complex that functions in the early steps of protein synthesis by forming a ternary complex with GTP and initiator tRNA. This complex binds to a 40S ribosomal subunit, followed by mRNA binding to form the 43S pre-initiation complex (43S PIC). Junction of the 60S ribosomal subunit to form the 80S initiation complex is preceded by hydrolysis of the GTP bound to eIF2 and release of an eIF2-GDP binary complex. In order for eIF2 to recycle and catalyze another round of initiation, the GDP bound to eIF2 must exchange with GTP by way of a reaction catalyzed by eIF-2B. The chain is Eukaryotic translation initiation factor 2 subunit 3 from Danio rerio (Zebrafish).